The sequence spans 237 residues: Phosphoadenosine 5'-phosphosulfate reductase (237 aa).

Cysteine 231 (nucleophile; cysteine thiosulfonate intermediate) is an active-site residue.

The protein belongs to the PAPS reductase family. CysH subfamily.

It localises to the cytoplasm. It catalyses the reaction [thioredoxin]-disulfide + sulfite + adenosine 3',5'-bisphosphate + 2 H(+) = [thioredoxin]-dithiol + 3'-phosphoadenylyl sulfate. It functions in the pathway sulfur metabolism; hydrogen sulfide biosynthesis; sulfite from sulfate: step 3/3. Functionally, catalyzes the formation of sulfite from phosphoadenosine 5'-phosphosulfate (PAPS) using thioredoxin as an electron donor. The protein is Phosphoadenosine 5'-phosphosulfate reductase of Xylella fastidiosa (strain 9a5c).